Reading from the N-terminus, the 292-residue chain is tRNA-cytidine(32) 2-sulfurtransferase (292 aa).

The PP-loop motif signature appears at 62–67 (SGGKDS). Residues Cys137, Cys140, and Cys228 each contribute to the [4Fe-4S] cluster site.

The protein belongs to the TtcA family. In terms of assembly, homodimer. Mg(2+) serves as cofactor. The cofactor is [4Fe-4S] cluster.

The protein resides in the cytoplasm. The enzyme catalyses cytidine(32) in tRNA + S-sulfanyl-L-cysteinyl-[cysteine desulfurase] + AH2 + ATP = 2-thiocytidine(32) in tRNA + L-cysteinyl-[cysteine desulfurase] + A + AMP + diphosphate + H(+). It functions in the pathway tRNA modification. Catalyzes the ATP-dependent 2-thiolation of cytidine in position 32 of tRNA, to form 2-thiocytidine (s(2)C32). The sulfur atoms are provided by the cysteine/cysteine desulfurase (IscS) system. The sequence is that of tRNA-cytidine(32) 2-sulfurtransferase from Brucella anthropi (strain ATCC 49188 / DSM 6882 / CCUG 24695 / JCM 21032 / LMG 3331 / NBRC 15819 / NCTC 12168 / Alc 37) (Ochrobactrum anthropi).